A 377-amino-acid chain; its full sequence is Protein RecA (377 aa).

82-89 (GPESSGKT) is an ATP binding site. The disordered stretch occupies residues 345-377 (EGSEVSANSMRPLASAARQASSRPNLSQVSANG). Positions 362 to 377 (RQASSRPNLSQVSANG) are enriched in polar residues.

Belongs to the RecA family.

It localises to the cytoplasm. In terms of biological role, can catalyze the hydrolysis of ATP in the presence of single-stranded DNA, the ATP-dependent uptake of single-stranded DNA by duplex DNA, and the ATP-dependent hybridization of homologous single-stranded DNAs. It interacts with LexA causing its activation and leading to its autocatalytic cleavage. This chain is Protein RecA, found in Prochlorococcus marinus (strain NATL2A).